Consider the following 445-residue polypeptide: Phosphoglucosamine mutase (445 aa).

The Phosphoserine intermediate role is filled by S102. Positions 102, 241, 243, and 245 each coordinate Mg(2+). The residue at position 102 (S102) is a Phosphoserine.

It belongs to the phosphohexose mutase family. Mg(2+) is required as a cofactor. In terms of processing, activated by phosphorylation.

The enzyme catalyses alpha-D-glucosamine 1-phosphate = D-glucosamine 6-phosphate. Catalyzes the conversion of glucosamine-6-phosphate to glucosamine-1-phosphate. The chain is Phosphoglucosamine mutase from Citrobacter koseri (strain ATCC BAA-895 / CDC 4225-83 / SGSC4696).